We begin with the raw amino-acid sequence, 319 residues long: F-box only protein 8 (319 aa).

The F-box domain occupies 68–111 (FINLEMLPPELSFTILSYLNATDLCLASCVWQDLANDELLWQGL). Residues 146–276 (FNANPDEGVN…LILLSIDLTS (131 aa)) form the SEC7 domain.

Its function is as follows. May promote guanine-nucleotide exchange on an ARF. Promotes the activation of ARF through replacement of GDP with GTP (Potential). This Bos taurus (Bovine) protein is F-box only protein 8 (FBXO8).